The sequence spans 209 residues: Ras-like protein (209 aa).

10–17 contributes to the GTP binding site; that stretch reads GGGLVGKS. Positions 55–63 match the Effector region motif; it reads YDPTVEDSR. Phosphothreonine is present on Thr58. Residues 79-83 and 140-143 each bind GTP; these read DTAGQ and NKAD. Cysteine methyl ester is present on Cys206. Cys206 carries S-geranylgeranyl cysteine lipidation. Residues 207–209 constitute a propeptide, removed in mature form; the sequence is LII.

This sequence belongs to the small GTPase superfamily. Ras family. Post-translationally, phosphorylated in the presence of insulin.

Its subcellular location is the cell membrane. It catalyses the reaction GTP + H2O = GDP + phosphate + H(+). Its activity is regulated as follows. Alternates between an inactive form bound to GDP and an active form bound to GTP. Activated by a guanine nucleotide-exchange factor (GEF) and inactivated by a GTPase-activating protein (GAP). Functionally, this protein is activated by the insulin/insulin (insulin-like)-receptor system. This transition enables the ras protein to interact with the lectin-receptor/lectin complex, a process which ultimately lead to an initiation of an intra-cellular signal-transduction chain. The protein is Ras-like protein of Geodia cydonium (Sponge).